We begin with the raw amino-acid sequence, 173 residues long: Bifunctional protein PyrR (173 aa).

The PRPP-binding signature appears at 93–105 (IILVDDVLYTGRT).

Belongs to the purine/pyrimidine phosphoribosyltransferase family. PyrR subfamily. As to quaternary structure, homodimer and homohexamer; in equilibrium.

The enzyme catalyses UMP + diphosphate = 5-phospho-alpha-D-ribose 1-diphosphate + uracil. In terms of biological role, regulates transcriptional attenuation of the pyrimidine nucleotide (pyr) operon by binding in a uridine-dependent manner to specific sites on pyr mRNA. This disrupts an antiterminator hairpin in the RNA and favors formation of a downstream transcription terminator, leading to a reduced expression of downstream genes. Functionally, also displays a weak uracil phosphoribosyltransferase activity which is not physiologically significant. The protein is Bifunctional protein PyrR of Streptococcus equi subsp. zooepidemicus (strain H70).